A 360-amino-acid polypeptide reads, in one-letter code: Nucleoporin SEH1 (360 aa).

6 WD repeats span residues Asp10 to Cys49, Thr55 to Lys96, Asp111 to Gln152, Ser160 to Ala210, Thr217 to Thr258, and Asn276 to Cys315. Lys12 is covalently cross-linked (Glycyl lysine isopeptide (Lys-Gly) (interchain with G-Cter in SUMO2)). Phosphoserine is present on residues Ser179 and Ser190. The segment covering Ser324–Ser354 has biased composition (polar residues). The disordered stretch occupies residues Ser324–Ser360.

It belongs to the WD repeat SEC13 family. As to quaternary structure, component of the Nup107-160 subcomplex of the nuclear pore complex (NPC). The Nup107-160 subcomplex includes NUP160, NUP133, NUP107, NUP98, NUP85, NUP43, NUP37, SEH1 and SEC13. The SEH1 subunit appears to be only weakly associated with the Nup107-160 subcomplex. Component of the GATOR2 subcomplex, composed of MIOS, SEC13, SEH1L, WDR24 and WDR59. The GATOR2 complex interacts with CASTOR1 and CASTOR2; the interaction is negatively regulated by arginine. The GATOR2 complex interacts with SESN1, SESN2 and SESN3; the interaction is negatively regulated by amino acids. SESN1, SESN2 and SESN3 convey leucine availability via direct interaction with SEH1L and WDR24.

Its subcellular location is the chromosome. The protein localises to the centromere. It localises to the kinetochore. The protein resides in the nucleus. It is found in the nuclear pore complex. Its subcellular location is the lysosome membrane. The GATOR2 complex is negatively regulated by the upstream amino acid sensors CASTOR1 and SESN2, which sequester the GATOR2 complex in absence of amino acids. In the presence of abundant amino acids, GATOR2 is released from CASTOR1 and SESN2 and activated. Component of the Nup107-160 subcomplex of the nuclear pore complex (NPC). The Nup107-160 subcomplex is required for the assembly of a functional NPC. The Nup107-160 subcomplex is also required for normal kinetochore microtubule attachment, mitotic progression and chromosome segregation. This subunit plays a role in recruitment of the Nup107-160 subcomplex to the kinetochore. In terms of biological role, as a component of the GATOR2 complex, functions as an activator of the amino acid-sensing branch of the mTORC1 signaling pathway. The GATOR2 complex indirectly activates mTORC1 through the inhibition of the GATOR1 subcomplex. GATOR2 probably acts as an E3 ubiquitin-protein ligase toward GATOR1. In the presence of abundant amino acids, the GATOR2 complex mediates ubiquitination of the NPRL2 core component of the GATOR1 complex, leading to GATOR1 inactivation. In the absence of amino acids, GATOR2 is inhibited, activating the GATOR1 complex. Within the GATOR2 complex, SEC13 and SEH1L are required to stabilize the complex. The protein is Nucleoporin SEH1 (SEH1L) of Homo sapiens (Human).